Here is a 415-residue protein sequence, read N- to C-terminus: Tyrosine--tRNA ligase (415 aa).

Tyr-34 is an L-tyrosine binding site. The short motif at 39-48 (PSADSLHLGN) is the 'HIGH' region element. 2 residues coordinate L-tyrosine: Tyr-162 and Gln-166. The 'KMSKS' region signature appears at 224 to 228 (KFGKS). Lys-227 contacts ATP. The S4 RNA-binding domain occupies 346–413 (IKIIDLLNLA…KRNYFLIVWN (68 aa)).

Belongs to the class-I aminoacyl-tRNA synthetase family. TyrS type 1 subfamily. In terms of assembly, homodimer.

It is found in the cytoplasm. It catalyses the reaction tRNA(Tyr) + L-tyrosine + ATP = L-tyrosyl-tRNA(Tyr) + AMP + diphosphate + H(+). Catalyzes the attachment of tyrosine to tRNA(Tyr) in a two-step reaction: tyrosine is first activated by ATP to form Tyr-AMP and then transferred to the acceptor end of tRNA(Tyr). This chain is Tyrosine--tRNA ligase, found in Ureaplasma urealyticum serovar 10 (strain ATCC 33699 / Western).